An 852-amino-acid chain; its full sequence is DNA mismatch repair protein MutS (852 aa).

615–622 provides a ligand contact to ATP; that stretch reads GPNMAGKS.

This sequence belongs to the DNA mismatch repair MutS family.

This protein is involved in the repair of mismatches in DNA. It is possible that it carries out the mismatch recognition step. This protein has a weak ATPase activity. This Thermodesulfovibrio yellowstonii (strain ATCC 51303 / DSM 11347 / YP87) protein is DNA mismatch repair protein MutS.